A 153-amino-acid chain; its full sequence is UPAR/Ly6 domain-containing protein cold (153 aa).

The N-terminal stretch at 1-25 (MKSWEIAVVLVAAVYLCSQVNFVAG) is a signal peptide. At 26–130 (LECYVCSNQT…FVISGAPSRQ (105 aa)) the chain is on the extracellular side. Cystine bridges form between cysteine 28–cysteine 55, cysteine 31–cysteine 41, cysteine 48–cysteine 81, cysteine 87–cysteine 112, cysteine 99–cysteine 109, and cysteine 113–cysteine 118. Asparagine 33 carries an N-linked (GlcNAc...) asparagine glycan. The GPI-anchor amidated serine moiety is linked to residue serine 124. Positions 125 to 153 (GAPSRQGYGVCLTLLTALLGLGSWLIPRS) are cleaved as a propeptide — removed in mature form. Residues 131 to 151 (GYGVCLTLLTALLGLGSWLIP) form a helical membrane-spanning segment. At 152–153 (RS) the chain is on the cytoplasmic side.

It belongs to the snake toxin-like superfamily. In terms of processing, GPI-anchored. As to expression, expressed in all tissues that form septate junctions, including hindgut, trachea, epidermis and dorsal pouch. Expressed in subperineurial glial cells that form the hemolymph-brain barrier of the central nervous system.

Its subcellular location is the endosome membrane. The protein resides in the endoplasmic reticulum membrane. It is found in the cell membrane. The protein localises to the cell junction. It localises to the septate junction. In terms of biological role, required for septate junction assembly, possibly by organizing the preassembly and transport of septate junction proteins such as dlg1/disks large 1 and Nrx-IV/Neurexin-IV. Involved in paracellular barrier functions of trachea, hindgut and salivary gland mediated by epithelial cell septate junctions. Involved in paracellular barrier functions of the hemolymph-brain barrier (insect blood-brain barrier) mediated by glial cell septate junctions. Required for maintenance of septate junctions in imaginal disk epithelial cells. Involved in the epithelial cell wound-healing response. Directly or indirectly mediates cell-cell adhesion during septate junction formation. In Drosophila melanogaster (Fruit fly), this protein is UPAR/Ly6 domain-containing protein cold.